A 296-amino-acid polypeptide reads, in one-letter code: MANLNKRPDWIKVKAPNSVEYYNTKDLIKNLRLNTVCEEAACPNIGECWSKKHATMMILGSVCTRACRFCNVKTGRPDLLDPHEPQRLAEAVQKLNLKHVVITSVDRDDLEDGGALHFAECINEIRKSSPNTTVEILTPDFLRKEGAAEIIAHSKPDVFNHNVETVPSLYKTIRPGARYYNSLSLLHSIKKLSSEIFTKSGMMVGLGEKISEVIQVMDDLREAKVDFLTIGQYLQPTKDHAEVAKYVTPEEFKYLERVARTKGFLMVSASPLTRSSYHADEDFQKLKQNYRQSLVS.

Positions 37, 42, 48, 63, 67, 70, and 276 each coordinate [4Fe-4S] cluster. Residues 49–265 (WSKKHATMMI…ERVARTKGFL (217 aa)) enclose the Radical SAM core domain.

It belongs to the radical SAM superfamily. Lipoyl synthase family. Requires [4Fe-4S] cluster as cofactor.

The protein localises to the cytoplasm. The catalysed reaction is [[Fe-S] cluster scaffold protein carrying a second [4Fe-4S](2+) cluster] + N(6)-octanoyl-L-lysyl-[protein] + 2 oxidized [2Fe-2S]-[ferredoxin] + 2 S-adenosyl-L-methionine + 4 H(+) = [[Fe-S] cluster scaffold protein] + N(6)-[(R)-dihydrolipoyl]-L-lysyl-[protein] + 4 Fe(3+) + 2 hydrogen sulfide + 2 5'-deoxyadenosine + 2 L-methionine + 2 reduced [2Fe-2S]-[ferredoxin]. Its pathway is protein modification; protein lipoylation via endogenous pathway; protein N(6)-(lipoyl)lysine from octanoyl-[acyl-carrier-protein]: step 2/2. Functionally, catalyzes the radical-mediated insertion of two sulfur atoms into the C-6 and C-8 positions of the octanoyl moiety bound to the lipoyl domains of lipoate-dependent enzymes, thereby converting the octanoylated domains into lipoylated derivatives. The protein is Lipoyl synthase of Rickettsia canadensis (strain McKiel).